A 247-amino-acid chain; its full sequence is Probable transcriptional regulatory protein Gbem_3313 (247 aa).

It belongs to the TACO1 family.

The protein resides in the cytoplasm. The protein is Probable transcriptional regulatory protein Gbem_3313 of Citrifermentans bemidjiense (strain ATCC BAA-1014 / DSM 16622 / JCM 12645 / Bem) (Geobacter bemidjiensis).